The following is a 285-amino-acid chain: Protease HtpX homolog (285 aa).

The next 2 helical transmembrane spans lie at 7-27 (TAMLMAAITALFIVIGGMIGG) and 30-50 (GMTIALVIALGMNFFSYWFSD). His-131 provides a ligand contact to Zn(2+). Residue Glu-132 is part of the active site. His-135 serves as a coordination point for Zn(2+). Transmembrane regions (helical) follow at residues 141–161 (ILISTISATMAGAISALANFA) and 177–197 (IAGIAVALLAPIAGALIQMAI). Glu-202 serves as a coordination point for Zn(2+).

This sequence belongs to the peptidase M48B family. Requires Zn(2+) as cofactor.

It localises to the cell inner membrane. This chain is Protease HtpX homolog, found in Paraburkholderia phytofirmans (strain DSM 17436 / LMG 22146 / PsJN) (Burkholderia phytofirmans).